Here is a 50-residue protein sequence, read N- to C-terminus: Sproutin (50 aa).

Phosphoserine; by PKC is present on Ser-8.

In terms of tissue distribution, brain.

Functionally, neurite outgrowth factor. The chain is Sproutin from Rattus norvegicus (Rat).